The chain runs to 549 residues: Probable protein kinase UbiB (549 aa).

A Protein kinase domain is found at 123 to 501 (DFNETPLASA…QQQAHKSNYL (379 aa)). Residues 129-137 (LASASISQV) and lysine 152 each bind ATP. Aspartate 287 functions as the Proton acceptor in the catalytic mechanism. The next 2 membrane-spanning stretches (helical) occupy residues 498–518 (SNYL…LFNQ) and 520–540 (ATLW…IIGW).

It belongs to the ABC1 family. UbiB subfamily.

It localises to the cell inner membrane. The protein operates within cofactor biosynthesis; ubiquinone biosynthesis [regulation]. In terms of biological role, is probably a protein kinase regulator of UbiI activity which is involved in aerobic coenzyme Q (ubiquinone) biosynthesis. The polypeptide is Probable protein kinase UbiB (Shewanella sp. (strain MR-4)).